The primary structure comprises 119 residues: Large ribosomal subunit protein P3z (119 aa).

Positions 79 to 90 (AGGAASSGGGAG) are enriched in gly residues. The disordered stretch occupies residues 79–119 (AGGAASSGGGAGEAAAAPKEDEKKKEESEEEEGDFGFDLFG). The segment covering 96 to 105 (PKEDEKKKEE) has biased composition (basic and acidic residues).

The protein belongs to the eukaryotic ribosomal protein P1/P2 family. In terms of processing, phosphorylated.

Functionally, plays an important role in the elongation step of protein synthesis. This Arabidopsis thaliana (Mouse-ear cress) protein is Large ribosomal subunit protein P3z (RPP3A).